The chain runs to 542 residues: DM7 family protein CG15333 (542 aa).

It belongs to the DM7 family.

The chain is DM7 family protein CG15333 from Drosophila melanogaster (Fruit fly).